We begin with the raw amino-acid sequence, 457 residues long: tRNA modification GTPase MnmE (457 aa).

Positions 22, 86, and 125 each coordinate (6S)-5-formyl-5,6,7,8-tetrahydrofolate. One can recognise a TrmE-type G domain in the interval 221–381 (GLRAVLAGRP…LEAEVARVAG (161 aa)). A K(+)-binding site is contributed by N231. Residues 231–236 (NVGKSS), 250–256 (TPIPGTT), and 275–278 (DTAG) each bind GTP. Mg(2+) is bound at residue S235. 3 residues coordinate K(+): T250, I252, and T255. Residue T256 participates in Mg(2+) binding. K457 contacts (6S)-5-formyl-5,6,7,8-tetrahydrofolate.

The protein belongs to the TRAFAC class TrmE-Era-EngA-EngB-Septin-like GTPase superfamily. TrmE GTPase family. Homodimer. Heterotetramer of two MnmE and two MnmG subunits. The cofactor is K(+).

The protein localises to the cytoplasm. Functionally, exhibits a very high intrinsic GTPase hydrolysis rate. Involved in the addition of a carboxymethylaminomethyl (cmnm) group at the wobble position (U34) of certain tRNAs, forming tRNA-cmnm(5)s(2)U34. The chain is tRNA modification GTPase MnmE from Symbiobacterium thermophilum (strain DSM 24528 / JCM 14929 / IAM 14863 / T).